A 497-amino-acid polypeptide reads, in one-letter code: Glycerol kinase (497 aa).

T11 is an ADP binding site. The ATP site is built by T11, T12, and S13. Residue T11 coordinates sn-glycerol 3-phosphate. Residue R15 coordinates ADP. 4 residues coordinate sn-glycerol 3-phosphate: R81, E82, Y133, and D242. Glycerol contacts are provided by R81, E82, Y133, D242, and Q243. ADP is bound by residues T264 and G306. Residues T264, G306, Q310, and G407 each contribute to the ATP site. G407 and N411 together coordinate ADP.

Belongs to the FGGY kinase family.

It carries out the reaction glycerol + ATP = sn-glycerol 3-phosphate + ADP + H(+). The protein operates within polyol metabolism; glycerol degradation via glycerol kinase pathway; sn-glycerol 3-phosphate from glycerol: step 1/1. Inhibited by fructose 1,6-bisphosphate (FBP). Functionally, key enzyme in the regulation of glycerol uptake and metabolism. Catalyzes the phosphorylation of glycerol to yield sn-glycerol 3-phosphate. The polypeptide is Glycerol kinase (Alcanivorax borkumensis (strain ATCC 700651 / DSM 11573 / NCIMB 13689 / SK2)).